A 1424-amino-acid polypeptide reads, in one-letter code: DNA-directed RNA polymerase subunit beta' (1424 aa).

Zn(2+)-binding residues include cysteine 60, cysteine 62, cysteine 75, and cysteine 78. Mg(2+) contacts are provided by aspartate 449, aspartate 451, and aspartate 453. Cysteine 783, cysteine 857, cysteine 864, and cysteine 867 together coordinate Zn(2+).

Belongs to the RNA polymerase beta' chain family. As to quaternary structure, the RNAP catalytic core consists of 2 alpha, 1 beta, 1 beta' and 1 omega subunit. When a sigma factor is associated with the core the holoenzyme is formed, which can initiate transcription. Mg(2+) serves as cofactor. Requires Zn(2+) as cofactor.

It catalyses the reaction RNA(n) + a ribonucleoside 5'-triphosphate = RNA(n+1) + diphosphate. Its function is as follows. DNA-dependent RNA polymerase catalyzes the transcription of DNA into RNA using the four ribonucleoside triphosphates as substrates. The polypeptide is DNA-directed RNA polymerase subunit beta' (Treponema denticola (strain ATCC 35405 / DSM 14222 / CIP 103919 / JCM 8153 / KCTC 15104)).